Here is a 311-residue protein sequence, read N- to C-terminus: 3'(2'),5'-bisphosphate nucleotidase 1 (311 aa).

Residue Asp-49 is the Proton acceptor of the active site. The Mg(2+) site is built by Glu-72, Asp-116, Leu-118, and Asp-119. Thr-121 functions as the Proton acceptor in the catalytic mechanism. Residues Thr-202, His-205, Gly-227, and Lys-231 each contribute to the AMP site. Asp-254 contacts Mg(2+).

This sequence belongs to the inositol monophosphatase superfamily. The cofactor is Mg(2+).

The catalysed reaction is adenosine 3',5'-bisphosphate + H2O = AMP + phosphate. The enzyme catalyses adenosine 2',5'-bisphosphate + H2O = AMP + phosphate. It carries out the reaction 3'-phosphoadenylyl sulfate + H2O = adenosine 5'-phosphosulfate + phosphate. It catalyses the reaction 1D-myo-inositol 1,4-bisphosphate + H2O = 1D-myo-inositol 4-phosphate + phosphate. The catalysed reaction is 1D-myo-inositol 1,3,4-trisphosphate + H2O = 1D-myo-inositol 3,4-bisphosphate + phosphate. Its activity is regulated as follows. Inhibited by Li(+) and Ca(2+), but not by Na(+). Phosphatase that converts 3'(2')-phosphoadenosine 5'-phosphate (PAP) to AMP and adenosine 3'-phosphate 5'-phosphosulfate (PAPS) to adenosine 5'-phosphosulfate (APS). Is also able to hydrolyze inositol 1,4-bisphosphate (Ins(1,4)P2) and inositol 1,3,4-trisphosphate (Ins(1,3,4)P3), but is not active on AMP, 3'-AMP, fructose-1,6-bisphosphate, Ins(1)P, Ins(2)P and Ins(1,4,5)P3. Probably prevents the toxic accumulation of PAP, a compound which inhibits a variety of proteins, including PAPS-utilizing enzymes such as sulfotransferases, and RNA processing enzymes. Could also play a role in inositol recycling and phosphoinositide metabolism. This chain is 3'(2'),5'-bisphosphate nucleotidase 1 (bpnt1), found in Dictyostelium discoideum (Social amoeba).